The primary structure comprises 352 residues: Phosphate acyltransferase (352 aa).

The protein belongs to the PlsX family. Homodimer. Probably interacts with PlsY.

It localises to the cytoplasm. It carries out the reaction a fatty acyl-[ACP] + phosphate = an acyl phosphate + holo-[ACP]. The protein operates within lipid metabolism; phospholipid metabolism. Catalyzes the reversible formation of acyl-phosphate (acyl-PO(4)) from acyl-[acyl-carrier-protein] (acyl-ACP). This enzyme utilizes acyl-ACP as fatty acyl donor, but not acyl-CoA. The chain is Phosphate acyltransferase from Bordetella bronchiseptica (strain ATCC BAA-588 / NCTC 13252 / RB50) (Alcaligenes bronchisepticus).